The primary structure comprises 282 residues: MFAYKLLVDERGKRYLLKKNVEKFGTDLGIVDMKDIEEGVELKSHKGHTFYLVEPTMFDILKRMKRTVTTLLPKDIGFIIARAGIREGETVVEAGTGSGALTMYLSNAVGKTGKVITYDIRPEFAKVARKNLLRVGAIKKGQKIIGLDEEFDDEDEIEIEDGLFNVIQKIGDVREKIDEKDVDVIVLDLPDPWNVVENAKKALNKKRGRIVTYLPYIEQVKKTVEKLKEEGFWDIHTYEIIEREIEISEKGVRPSTRMIGHTGYITVARVPPEPLDREEEKE.

S-adenosyl-L-methionine is bound by residues 98–101 (SGAL), aspartate 119, aspartate 172, and aspartate 188.

Belongs to the class I-like SAM-binding methyltransferase superfamily. TRM61 family. Homotetramer composed of a dimer of dimers.

It catalyses the reaction adenosine(57)/adenosine(58) in tRNA + 2 S-adenosyl-L-methionine = N(1)-methyladenosine(57)/N(1)-methyladenosine(58) in tRNA + 2 S-adenosyl-L-homocysteine + 2 H(+). Catalyzes the S-adenosyl-L-methionine-dependent formation of N(1)-methyladenine at position 58 (m1A58) in tRNA. In Methanocaldococcus jannaschii (strain ATCC 43067 / DSM 2661 / JAL-1 / JCM 10045 / NBRC 100440) (Methanococcus jannaschii), this protein is tRNA (adenine(57)-N(1)/adenine(58)-N(1))-methyltransferase TrmI (trmI).